The sequence spans 410 residues: LL-diaminopimelate aminotransferase (410 aa).

The substrate site is built by tyrosine 15 and glycine 42. Pyridoxal 5'-phosphate-binding positions include tyrosine 72, 108 to 109, tyrosine 132, asparagine 187, tyrosine 218, and 246 to 248; these read SK and SFS. Positions 109, 132, and 187 each coordinate substrate. At lysine 249 the chain carries N6-(pyridoxal phosphate)lysine. The pyridoxal 5'-phosphate site is built by arginine 257 and asparagine 292. Positions 292 and 388 each coordinate substrate.

This sequence belongs to the class-I pyridoxal-phosphate-dependent aminotransferase family. LL-diaminopimelate aminotransferase subfamily. In terms of assembly, homodimer. Pyridoxal 5'-phosphate is required as a cofactor.

The catalysed reaction is (2S,6S)-2,6-diaminopimelate + 2-oxoglutarate = (S)-2,3,4,5-tetrahydrodipicolinate + L-glutamate + H2O + H(+). The protein operates within amino-acid biosynthesis; L-lysine biosynthesis via DAP pathway; LL-2,6-diaminopimelate from (S)-tetrahydrodipicolinate (aminotransferase route): step 1/1. In terms of biological role, involved in the synthesis of meso-diaminopimelate (m-DAP or DL-DAP), required for both lysine and peptidoglycan biosynthesis. Catalyzes the direct conversion of tetrahydrodipicolinate to LL-diaminopimelate. This is LL-diaminopimelate aminotransferase from Thermosynechococcus vestitus (strain NIES-2133 / IAM M-273 / BP-1).